The primary structure comprises 417 residues: Serine hydroxymethyltransferase (417 aa).

(6S)-5,6,7,8-tetrahydrofolate-binding positions include L121 and G125–L127. The residue at position 229 (K229) is an N6-(pyridoxal phosphate)lysine. S355–F357 is a binding site for (6S)-5,6,7,8-tetrahydrofolate.

The protein belongs to the SHMT family. In terms of assembly, homodimer. Pyridoxal 5'-phosphate serves as cofactor.

Its subcellular location is the cytoplasm. The catalysed reaction is (6R)-5,10-methylene-5,6,7,8-tetrahydrofolate + glycine + H2O = (6S)-5,6,7,8-tetrahydrofolate + L-serine. It functions in the pathway one-carbon metabolism; tetrahydrofolate interconversion. Its pathway is amino-acid biosynthesis; glycine biosynthesis; glycine from L-serine: step 1/1. Its function is as follows. Catalyzes the reversible interconversion of serine and glycine with tetrahydrofolate (THF) serving as the one-carbon carrier. This reaction serves as the major source of one-carbon groups required for the biosynthesis of purines, thymidylate, methionine, and other important biomolecules. Also exhibits THF-independent aldolase activity toward beta-hydroxyamino acids, producing glycine and aldehydes, via a retro-aldol mechanism. The sequence is that of Serine hydroxymethyltransferase from Edwardsiella ictaluri (strain 93-146).